A 208-amino-acid chain; its full sequence is CASP-like protein 1D1 (208 aa).

The interval 1 to 36 (MSSVDTEKPAPPPLETEAPPPPPPPPPPPPPPPPPP) is disordered. The Cytoplasmic portion of the chain corresponds to 1-41 (MSSVDTEKPAPPPLETEAPPPPPPPPPPPPPPPPPPAGYSA). Residues 9-36 (PAPPPLETEAPPPPPPPPPPPPPPPPPP) are compositionally biased toward pro residues. Residues 42-62 (LDVVLRILLLGSAVASVVVMV) traverse the membrane as a helical segment. Residues 63-89 (TSVQTKLIAVAGVPVLVSNKAKFQNSP) lie on the Extracellular side of the membrane. The helical transmembrane segment at 90 to 110 (AFIYFVAALSVVGLYSIITTL) threads the bilayer. The Cytoplasmic segment spans residues 111-133 (ASFIFISKPSCSTKTILHLAIWD). Residues 134–154 (VLMLGLAASATGTAGGVAYVG) traverse the membrane as a helical segment. At 155-180 (LKGNSHVGWNKVCNTYDKFCRHVGGS) the chain is on the extracellular side. The helical transmembrane segment at 181–201 (IAVALFASILLVLLVWLSLFT) threads the bilayer. The Cytoplasmic portion of the chain corresponds to 202–208 (LYSRIRK).

It belongs to the Casparian strip membrane proteins (CASP) family. Homodimer and heterodimers.

The protein localises to the cell membrane. This is CASP-like protein 1D1 from Vitis vinifera (Grape).